A 546-amino-acid polypeptide reads, in one-letter code: Oncoprotein-induced transcript 3 protein (546 aa).

The signal sequence occupies residues 1–19; it reads MPLSLLLTCLSTTVTLVSP. 2 N-linked (GlcNAc...) asparagine glycosylation sites follow: N89 and N116. Residues 182–222 form the EGF-like; calcium-binding domain; it reads DENECEHNNGGCSEICVNLKNSHRCACGVGRVLRSDGKTCE. 3 disulfides stabilise this stretch: C186–C197, C193–C206, and C208–C221. The region spanning 261–516 is the ZP domain; that stretch reads TCQVPVLCKS…SRCAQGCHRR (256 aa). N299 is a glycosylation site (N-linked (GlcNAc...) asparagine).

As to expression, liver-specific. Expressed only in the hepatocytes.

The protein localises to the nucleus envelope. Functionally, may be involved in hepatocellular function and development. In Mus musculus (Mouse), this protein is Oncoprotein-induced transcript 3 protein (Oit3).